Consider the following 187-residue polypeptide: Elongation factor P (187 aa).

Belongs to the elongation factor P family.

It is found in the cytoplasm. Its pathway is protein biosynthesis; polypeptide chain elongation. Involved in peptide bond synthesis. Stimulates efficient translation and peptide-bond synthesis on native or reconstituted 70S ribosomes in vitro. Probably functions indirectly by altering the affinity of the ribosome for aminoacyl-tRNA, thus increasing their reactivity as acceptors for peptidyl transferase. The protein is Elongation factor P of Mycoplasmopsis agalactiae (strain NCTC 10123 / CIP 59.7 / PG2) (Mycoplasma agalactiae).